The primary structure comprises 202 residues: Prohormone-4 (202 aa).

The N-terminal stretch at 1-28 is a signal peptide; the sequence is MVQRLCTSVAALSLALSACVFFPRAVMA. The LDL-receptor class A domain occupies 46-86; the sequence is ACRPYEPFKCPGDDTCISIQYLCDGAPDCQDGYDEDSRLCT. Cystine bridges form between C47/C61, C55/C74, and C68/C85.

The protein resides in the secreted. This Apis mellifera (Honeybee) protein is Prohormone-4.